We begin with the raw amino-acid sequence, 137 residues long: Small ribosomal subunit protein uS11 (137 aa).

The segment at 116-137 (EDVTPVPSDSTRKKGGRRGRRL) is disordered. Basic residues predominate over residues 128 to 137 (KKGGRRGRRL).

It belongs to the universal ribosomal protein uS11 family.

This Kluyveromyces lactis (strain ATCC 8585 / CBS 2359 / DSM 70799 / NBRC 1267 / NRRL Y-1140 / WM37) (Yeast) protein is Small ribosomal subunit protein uS11 (RPS14).